The chain runs to 668 residues: Auxilin-like clathrin uncoating factor SWA2 (668 aa).

Residues 1–95 (MSDPFAHLLT…ANNTPPSALA (95 aa)) form a disordered region. The segment at 1–100 (MSDPFAHLLT…PSALANTDDD (100 aa)) is CB1. A compositionally biased stretch (polar residues) spans 17–36 (SASASKETTPQSSNSPSITG). A phosphoserine mark is found at Ser-52 and Ser-64. A compositionally biased stretch (low complexity) spans 76–92 (PTNSTTKSNTANNTPPS). The UBA domain maps to 140 to 180 (DEVKDMEIARLMSLGLSIEEATEFYENDVTYERYLEILKSK). The segment at 238–302 (EANDRLNNYS…FETKIDITKR (65 aa)) is CB2. A phosphoserine mark is found at Ser-264, Ser-308, and Ser-312. Disordered regions lie at residues 302–323 (RTAPDVSHSSSPTSGILIEENS) and 339–359 (EGNLTNSKSNEDSTLFNENSN). Residues 303–362 (TAPDVSHSSSPTSGILIEENSRRNEPLIEDSLLDFSEGNLTNSKSNEDSTLFNENSNTDS) are CB3. Residues 340-359 (GNLTNSKSNEDSTLFNENSN) show a composition bias toward polar residues. TPR repeat units lie at residues 374–407 (YNEFKAKGTSLFKNGDYINSLQEYEKSLNTLPLN), 412–445 (IIALSNIIASQLKIGEYSKSIENSSMALELFPSS), and 467–500 (PKIMIRRAESFEHLESFKKALETYQELIKKNFFD). The interval 511–556 (QDFINPPPVKKSMPVKKKTTTTSPATKKQNLTASSSNSPISVDSTS) is disordered. Polar residues predominate over residues 539 to 555 (QNLTASSSNSPISVDST). The region spanning 603 to 668 (CNWKDVSMQD…DKFKLQNDIN (66 aa)) is the J domain.

Interacts with the clathrin light and heavy chains CLC1 and CHC1, respectively. Binds to clathrin with its N-terminal domain containing 3 clathrin-binding (CB) motifs. Association with clathrin is transient. Binds to polyubiquitin and ubiquitinated proteins.

Its subcellular location is the cytoplasm. The protein resides in the endoplasmic reticulum membrane. In terms of biological role, cofactor for the uncoating of clathrin-coated vesicles (CCVs) by Hsp70-type chaperones (SSA1/2/3 and SSB1/2). Coat disassembly is important for fusion of vesicles with target membranes and for recycling components of clathrin coats to the cytoplasm for further rounds of vesicle formation. Binds to assembled clathrin and recruits the ATP-activated chaperone to CCVs. Stimulates the ATPase activity of the clathrin-associated Hsp70-type chaperone SSA1, which then disrupts clathrin-clathrin interactions, leading to release of the clathrin coat. In addition, prevents unproductive clathrin assembly in the cell. Also required for cortical endoplasmic reticulum inheritance. The sequence is that of Auxilin-like clathrin uncoating factor SWA2 (SWA2) from Saccharomyces cerevisiae (strain ATCC 204508 / S288c) (Baker's yeast).